The following is a 217-amino-acid chain: Uracil-DNA glycosylase (217 aa).

Aspartate 62 serves as the catalytic Proton acceptor.

It belongs to the uracil-DNA glycosylase (UDG) superfamily. UNG family.

It localises to the cytoplasm. It carries out the reaction Hydrolyzes single-stranded DNA or mismatched double-stranded DNA and polynucleotides, releasing free uracil.. In terms of biological role, excises uracil residues from the DNA which can arise as a result of misincorporation of dUMP residues by DNA polymerase or due to deamination of cytosine. This chain is Uracil-DNA glycosylase, found in Streptococcus equi subsp. equi (strain 4047).